The following is a 146-amino-acid chain: Globin (146 aa).

Ala1 is subject to N-acetylalanine. Residues 1–146 form the Globin domain; it reads ALSAAEAEVV…IIDAMKKAGK (146 aa). His95 provides a ligand contact to heme b.

It belongs to the globin family. As to quaternary structure, monomer.

This chain is Globin, found in Dolabella auricularia (Shoulderblade sea cat).